A 275-amino-acid polypeptide reads, in one-letter code: 3-methyl-2-oxobutanoate hydroxymethyltransferase (275 aa).

Positions 44 and 83 each coordinate Mg(2+). Residues 44-45 (DS), aspartate 83, and lysine 113 contribute to the 3-methyl-2-oxobutanoate site. Glutamate 115 contributes to the Mg(2+) binding site. Residue glutamate 182 is the Proton acceptor of the active site.

It belongs to the PanB family. Homodecamer; pentamer of dimers. Mg(2+) is required as a cofactor.

It is found in the cytoplasm. It catalyses the reaction 3-methyl-2-oxobutanoate + (6R)-5,10-methylene-5,6,7,8-tetrahydrofolate + H2O = 2-dehydropantoate + (6S)-5,6,7,8-tetrahydrofolate. It functions in the pathway cofactor biosynthesis; (R)-pantothenate biosynthesis; (R)-pantoate from 3-methyl-2-oxobutanoate: step 1/2. In terms of biological role, catalyzes the reversible reaction in which hydroxymethyl group from 5,10-methylenetetrahydrofolate is transferred onto alpha-ketoisovalerate to form ketopantoate. This Clostridium beijerinckii (strain ATCC 51743 / NCIMB 8052) (Clostridium acetobutylicum) protein is 3-methyl-2-oxobutanoate hydroxymethyltransferase.